The sequence spans 361 residues: Holliday junction branch migration complex subunit RuvB (361 aa).

Composition is skewed to basic and acidic residues over residues 1-13 (MSDV…KLPE) and 33-43 (QGEHDIERSLR). The segment at 1–43 (MSDVERTEFKLPEGMDLSSPPQRNQDVDAAEQQGEHDIERSLR) is disordered. A large ATPase domain (RuvB-L) region spans residues 2–203 (SDVERTEFKL…FGFTAQMEYY (202 aa)). ATP is bound by residues Leu-42, Arg-43, Gly-84, Lys-87, Thr-88, Thr-89, 150-152 (EDF), Arg-193, Tyr-203, and Arg-240. Thr-88 contacts Mg(2+). Residues 204-274 (DTEDLTRVIS…AAQAALRVFD (71 aa)) form a small ATPAse domain (RuvB-S) region. The head domain (RuvB-H) stretch occupies residues 277 to 361 (ERGLDRLDRA…PEGAIGGTLF (85 aa)). Residues Arg-332 and Arg-337 each contribute to the DNA site.

Belongs to the RuvB family. As to quaternary structure, homohexamer. Forms an RuvA(8)-RuvB(12)-Holliday junction (HJ) complex. HJ DNA is sandwiched between 2 RuvA tetramers; dsDNA enters through RuvA and exits via RuvB. An RuvB hexamer assembles on each DNA strand where it exits the tetramer. Each RuvB hexamer is contacted by two RuvA subunits (via domain III) on 2 adjacent RuvB subunits; this complex drives branch migration. In the full resolvosome a probable DNA-RuvA(4)-RuvB(12)-RuvC(2) complex forms which resolves the HJ.

Its subcellular location is the cytoplasm. It catalyses the reaction ATP + H2O = ADP + phosphate + H(+). Its function is as follows. The RuvA-RuvB-RuvC complex processes Holliday junction (HJ) DNA during genetic recombination and DNA repair, while the RuvA-RuvB complex plays an important role in the rescue of blocked DNA replication forks via replication fork reversal (RFR). RuvA specifically binds to HJ cruciform DNA, conferring on it an open structure. The RuvB hexamer acts as an ATP-dependent pump, pulling dsDNA into and through the RuvAB complex. RuvB forms 2 homohexamers on either side of HJ DNA bound by 1 or 2 RuvA tetramers; 4 subunits per hexamer contact DNA at a time. Coordinated motions by a converter formed by DNA-disengaged RuvB subunits stimulates ATP hydrolysis and nucleotide exchange. Immobilization of the converter enables RuvB to convert the ATP-contained energy into a lever motion, pulling 2 nucleotides of DNA out of the RuvA tetramer per ATP hydrolyzed, thus driving DNA branch migration. The RuvB motors rotate together with the DNA substrate, which together with the progressing nucleotide cycle form the mechanistic basis for DNA recombination by continuous HJ branch migration. Branch migration allows RuvC to scan DNA until it finds its consensus sequence, where it cleaves and resolves cruciform DNA. This chain is Holliday junction branch migration complex subunit RuvB, found in Corynebacterium aurimucosum (strain ATCC 700975 / DSM 44827 / CIP 107346 / CN-1) (Corynebacterium nigricans).